Reading from the N-terminus, the 513-residue chain is MNKFLALLFVLALFANIAFSCEGHPEHDHGDGDHEHDHDESFVKILDSDNFHNSVSEHDVTLVMFYAPWCGHCKTLKPLYEEAAKQLSANKKIAIAKVDCTQHEQLCKQNKVQGYPTLVVFKNGKAEPYEGDRTTKSIVQTLEEELKPTISTLESNEDIEEFKKQHPISVVGFFDNDHDDRFKLFSELAGNNKKSAKFAVVIDKDFSKEHVESTPNVVLFRSFDEPTVAHKGEFDSESLIKFIKGNSVPLLGEINRNTYKKYESIAVPLAYLFIDSTQDNTQVLEDVKKIATSQKGNAVFCWVDMKKFPQQATHMGLSGKVVPAISVDSVANKARYNFDEKETFSFDTVSKWIQDVIGGKVSPFVKSQPEPESNDAPVKVAVGTTFKKLVLDSPKDVLVEFYAPWCGHCKNLAPIYDKLGEYLKDVESVSIVKIDADSNDVPSDIEIRGYPTIMLFKADDKENPISYEGQRNDHMNFVEFIQDNAAIEFKLPSSQTDDNVESKKDSSAKHDEL.

Residues 1-20 (MNKFLALLFVLALFANIAFS) form the signal peptide. Thioredoxin domains follow at residues 21–147 (CEGH…EELK) and 355–486 (DVIG…DNAA). Residues C70, C73, C406, and C409 each act as nucleophile in the active site. Intrachain disulfides connect C70/C73 and C406/C409. Residues 491–513 (LPSSQTDDNVESKKDSSAKHDEL) form a disordered region. Over residues 500 to 513 (VESKKDSSAKHDEL) the composition is skewed to basic and acidic residues. The short motif at 510–513 (HDEL) is the Prevents secretion from ER element.

It belongs to the protein disulfide isomerase family.

It localises to the endoplasmic reticulum lumen. It catalyses the reaction Catalyzes the rearrangement of -S-S- bonds in proteins.. Participates in the folding of proteins containing disulfide bonds, may be involved in glycosylation, prolyl hydroxylation and triglyceride transfer. This chain is Protein disulfide-isomerase 2 (pdi2), found in Dictyostelium discoideum (Social amoeba).